Here is a 197-residue protein sequence, read N- to C-terminus: FMN-dependent NADH:quinone oxidoreductase (197 aa).

Position 10 (serine 10) interacts with FMN.

The protein belongs to the azoreductase type 1 family. Homodimer. FMN is required as a cofactor.

The catalysed reaction is 2 a quinone + NADH + H(+) = 2 a 1,4-benzosemiquinone + NAD(+). The enzyme catalyses N,N-dimethyl-1,4-phenylenediamine + anthranilate + 2 NAD(+) = 2-(4-dimethylaminophenyl)diazenylbenzoate + 2 NADH + 2 H(+). Functionally, quinone reductase that provides resistance to thiol-specific stress caused by electrophilic quinones. In terms of biological role, also exhibits azoreductase activity. Catalyzes the reductive cleavage of the azo bond in aromatic azo compounds to the corresponding amines. The protein is FMN-dependent NADH:quinone oxidoreductase of Mycoplasma genitalium (strain ATCC 33530 / DSM 19775 / NCTC 10195 / G37) (Mycoplasmoides genitalium).